Reading from the N-terminus, the 246-residue chain is Biosynthetic peptidoglycan transglycosylase (246 aa).

A helical membrane pass occupies residues 27-47; that stretch reads VVFCFFFAVFALLLIFRFVPI.

This sequence belongs to the glycosyltransferase 51 family.

It is found in the cell inner membrane. It catalyses the reaction [GlcNAc-(1-&gt;4)-Mur2Ac(oyl-L-Ala-gamma-D-Glu-L-Lys-D-Ala-D-Ala)](n)-di-trans,octa-cis-undecaprenyl diphosphate + beta-D-GlcNAc-(1-&gt;4)-Mur2Ac(oyl-L-Ala-gamma-D-Glu-L-Lys-D-Ala-D-Ala)-di-trans,octa-cis-undecaprenyl diphosphate = [GlcNAc-(1-&gt;4)-Mur2Ac(oyl-L-Ala-gamma-D-Glu-L-Lys-D-Ala-D-Ala)](n+1)-di-trans,octa-cis-undecaprenyl diphosphate + di-trans,octa-cis-undecaprenyl diphosphate + H(+). Its pathway is cell wall biogenesis; peptidoglycan biosynthesis. Its function is as follows. Peptidoglycan polymerase that catalyzes glycan chain elongation from lipid-linked precursors. This chain is Biosynthetic peptidoglycan transglycosylase, found in Haemophilus influenzae (strain ATCC 51907 / DSM 11121 / KW20 / Rd).